Here is a 432-residue protein sequence, read N- to C-terminus: Trigger factor (432 aa).

The region spanning E161–P246 is the PPIase FKBP-type domain.

The protein belongs to the FKBP-type PPIase family. Tig subfamily. As to quaternary structure, homodimer and monomer. In vivo most of the ribosomes are in complex with monomeric TF. Uncomplexed TF, however, is in a monomer-dimer equilibrium with approximately two thirds of TF existing in a dimeric state.

The protein localises to the cytoplasm. The catalysed reaction is [protein]-peptidylproline (omega=180) = [protein]-peptidylproline (omega=0). Its function is as follows. Involved in protein export. Acts as a chaperone by maintaining the newly synthesized protein in an open conformation. Functions as a peptidyl-prolyl cis-trans isomerase. In Escherichia coli O127:H6 (strain E2348/69 / EPEC), this protein is Trigger factor.